Reading from the N-terminus, the 166-residue chain is Phospholipase A2 inhibitor clone 02/03/06/07 (166 aa).

The N-terminal stretch at 1 to 19 (MRLILLSGLLLLGTFLANG) is a signal peptide. A C-type lectin domain is found at 46 to 161 (LKHAFLTVHK…CDDNLLVVCE (116 aa)). 2 cysteine pairs are disulfide-bonded: Cys83–Cys160 and Cys138–Cys152. N-linked (GlcNAc...) asparagine glycosylation is present at Asn122.

The protein belongs to the alpha-type phospholipase A2 inhibitor family. As to quaternary structure, homotrimer; non-covalently linked. In terms of tissue distribution, expressed by the liver.

It localises to the secreted. This phospholipase A2 inhibitor binds directly phospholipase A2 in the presence or absence of calcium. The sequence is that of Phospholipase A2 inhibitor clone 02/03/06/07 from Lachesis muta muta (Bushmaster).